The primary structure comprises 129 residues: Small ribosomal subunit protein uS8 (129 aa).

Belongs to the universal ribosomal protein uS8 family. In terms of assembly, part of the 30S ribosomal subunit.

In terms of biological role, one of the primary rRNA binding proteins, it binds directly to 16S rRNA central domain where it helps coordinate assembly of the platform of the 30S subunit. This chain is Small ribosomal subunit protein uS8, found in Picrophilus torridus (strain ATCC 700027 / DSM 9790 / JCM 10055 / NBRC 100828 / KAW 2/3).